A 256-amino-acid chain; its full sequence is 5-keto-4-deoxy-D-glucarate aldolase (256 aa).

The Proton acceptor role is filled by His50. Gln151 contributes to the substrate binding site. Position 153 (Glu153) interacts with Mg(2+). Substrate is bound by residues Ser178 and Asp179. Residue Asp179 coordinates Mg(2+).

This sequence belongs to the HpcH/HpaI aldolase family. KDGluc aldolase subfamily. In terms of assembly, homohexamer; trimer of dimers. The cofactor is Mg(2+).

The catalysed reaction is 5-dehydro-4-deoxy-D-glucarate = 2-hydroxy-3-oxopropanoate + pyruvate. It catalyses the reaction 2-dehydro-3-deoxy-D-glucarate = 2-hydroxy-3-oxopropanoate + pyruvate. It functions in the pathway carbohydrate acid metabolism; galactarate degradation; D-glycerate from galactarate: step 2/3. In terms of biological role, catalyzes the reversible retro-aldol cleavage of both 5-keto-4-deoxy-D-glucarate and 2-keto-3-deoxy-D-glucarate to pyruvate and tartronic semialdehyde. The protein is 5-keto-4-deoxy-D-glucarate aldolase of Shigella dysenteriae serotype 1 (strain Sd197).